Consider the following 65-residue polypeptide: Small ribosomal subunit protein bS21 (65 aa).

Belongs to the bacterial ribosomal protein bS21 family.

This Thermodesulfovibrio yellowstonii (strain ATCC 51303 / DSM 11347 / YP87) protein is Small ribosomal subunit protein bS21.